The following is a 205-amino-acid chain: Small ribosomal subunit protein uS4 (205 aa).

In terms of domain architecture, S4 RNA-binding spans 94-157; sequence SRLDTVVYRM…KQIPLIQESV (64 aa).

Belongs to the universal ribosomal protein uS4 family. Part of the 30S ribosomal subunit. Contacts protein S5. The interaction surface between S4 and S5 is involved in control of translational fidelity.

One of the primary rRNA binding proteins, it binds directly to 16S rRNA where it nucleates assembly of the body of the 30S subunit. Its function is as follows. With S5 and S12 plays an important role in translational accuracy. The protein is Small ribosomal subunit protein uS4 of Rickettsia felis (strain ATCC VR-1525 / URRWXCal2) (Rickettsia azadi).